The chain runs to 94 residues: DNA-directed RNA polymerase subunit omega (94 aa).

Belongs to the RNA polymerase subunit omega family. As to quaternary structure, the RNAP catalytic core consists of 2 alpha, 1 beta, 1 beta' and 1 omega subunit. When a sigma factor is associated with the core the holoenzyme is formed, which can initiate transcription.

It carries out the reaction RNA(n) + a ribonucleoside 5'-triphosphate = RNA(n+1) + diphosphate. Its function is as follows. Promotes RNA polymerase assembly. Latches the N- and C-terminal regions of the beta' subunit thereby facilitating its interaction with the beta and alpha subunits. The polypeptide is DNA-directed RNA polymerase subunit omega (Frankia alni (strain DSM 45986 / CECT 9034 / ACN14a)).